The chain runs to 310 residues: Methionyl-tRNA formyltransferase (310 aa).

109 to 112 contributes to the (6S)-5,6,7,8-tetrahydrofolate binding site; the sequence is SLLP. Residues 283–310 form a disordered region; that stretch reads QPQGKKAMPAADWARGARIGDGERFGDD. The span at 300-310 shows a compositional bias: basic and acidic residues; the sequence is RIGDGERFGDD.

It belongs to the Fmt family.

It catalyses the reaction L-methionyl-tRNA(fMet) + (6R)-10-formyltetrahydrofolate = N-formyl-L-methionyl-tRNA(fMet) + (6S)-5,6,7,8-tetrahydrofolate + H(+). Its function is as follows. Attaches a formyl group to the free amino group of methionyl-tRNA(fMet). The formyl group appears to play a dual role in the initiator identity of N-formylmethionyl-tRNA by promoting its recognition by IF2 and preventing the misappropriation of this tRNA by the elongation apparatus. The polypeptide is Methionyl-tRNA formyltransferase (Thermobifida fusca (strain YX)).